The chain runs to 106 residues: MNKIRKGDEVIVLAGRDKGKRGTVSQRKDDSYLLIEGINLVKKHAKPNPLKGTTGGIIQKTMPIHQSNVAVFNAATGKADRVGIKVQSDGTRVRVFKSSGTEIKGT.

The protein belongs to the universal ribosomal protein uL24 family. In terms of assembly, part of the 50S ribosomal subunit.

In terms of biological role, one of two assembly initiator proteins, it binds directly to the 5'-end of the 23S rRNA, where it nucleates assembly of the 50S subunit. Its function is as follows. One of the proteins that surrounds the polypeptide exit tunnel on the outside of the subunit. The polypeptide is Large ribosomal subunit protein uL24 (Verminephrobacter eiseniae (strain EF01-2)).